The following is a 212-amino-acid chain: Inner membrane-spanning protein YciB (212 aa).

Helical transmembrane passes span 49–69 (APVLLATVVVILATLAQVLYL), 78–98 (TMLWVSLGLVTVMGGATIWFH), 105–125 (WKPSVLYWVMSAAFLLAPIVA), 150–170 (LAWAAFFAGMGVLNIWVAYNF), and 178–198 (FKAFGGMGLMFVFMLAQGLYM).

It belongs to the YciB family.

It localises to the cell inner membrane. Functionally, plays a role in cell envelope biogenesis, maintenance of cell envelope integrity and membrane homeostasis. The chain is Inner membrane-spanning protein YciB from Leptothrix cholodnii (strain ATCC 51168 / LMG 8142 / SP-6) (Leptothrix discophora (strain SP-6)).